Consider the following 502-residue polypeptide: ATP synthase subunit alpha (502 aa).

ATP is bound at residue 169–176; sequence GDKQTGKT.

The protein belongs to the ATPase alpha/beta chains family. F-type ATPases have 2 components, CF(1) - the catalytic core - and CF(0) - the membrane proton channel. CF(1) has five subunits: alpha(3), beta(3), gamma(1), delta(1), epsilon(1). CF(0) has three main subunits: a(1), b(2) and c(9-12). The alpha and beta chains form an alternating ring which encloses part of the gamma chain. CF(1) is attached to CF(0) by a central stalk formed by the gamma and epsilon chains, while a peripheral stalk is formed by the delta and b chains.

The protein resides in the cell membrane. The catalysed reaction is ATP + H2O + 4 H(+)(in) = ADP + phosphate + 5 H(+)(out). Its function is as follows. Produces ATP from ADP in the presence of a proton gradient across the membrane. The alpha chain is a regulatory subunit. The sequence is that of ATP synthase subunit alpha from Lachnoclostridium phytofermentans (strain ATCC 700394 / DSM 18823 / ISDg) (Clostridium phytofermentans).